The primary structure comprises 144 residues: Large ribosomal subunit protein uL15 (144 aa).

The segment at 1–48 (MIKLESLQDPSPRKRRTKLLGRGPSSGHGKTSCRGHKGDGSRSGYKRR) is disordered.

This sequence belongs to the universal ribosomal protein uL15 family. As to quaternary structure, part of the 50S ribosomal subunit.

In terms of biological role, binds to the 23S rRNA. In Chlamydia abortus (strain DSM 27085 / S26/3) (Chlamydophila abortus), this protein is Large ribosomal subunit protein uL15.